Consider the following 132-residue polypeptide: Large ribosomal subunit protein bL17 (132 aa).

It belongs to the bacterial ribosomal protein bL17 family. Part of the 50S ribosomal subunit. Contacts protein L32.

The protein is Large ribosomal subunit protein bL17 of Albidiferax ferrireducens (strain ATCC BAA-621 / DSM 15236 / T118) (Rhodoferax ferrireducens).